The primary structure comprises 103 residues: Small ribosomal subunit protein uS10 (103 aa).

The protein belongs to the universal ribosomal protein uS10 family. As to quaternary structure, part of the 30S ribosomal subunit.

Functionally, involved in the binding of tRNA to the ribosomes. The protein is Small ribosomal subunit protein uS10 of Sphingopyxis alaskensis (strain DSM 13593 / LMG 18877 / RB2256) (Sphingomonas alaskensis).